We begin with the raw amino-acid sequence, 174 residues long: Crossover junction endodeoxyribonuclease RuvC (174 aa).

Active-site residues include Asp-8, Glu-68, and Asp-140. Residues Asp-8, Glu-68, and Asp-140 each contribute to the Mg(2+) site.

Belongs to the RuvC family. Homodimer which binds Holliday junction (HJ) DNA. The HJ becomes 2-fold symmetrical on binding to RuvC with unstacked arms; it has a different conformation from HJ DNA in complex with RuvA. In the full resolvosome a probable DNA-RuvA(4)-RuvB(12)-RuvC(2) complex forms which resolves the HJ. Mg(2+) serves as cofactor.

It localises to the cytoplasm. The enzyme catalyses Endonucleolytic cleavage at a junction such as a reciprocal single-stranded crossover between two homologous DNA duplexes (Holliday junction).. In terms of biological role, the RuvA-RuvB-RuvC complex processes Holliday junction (HJ) DNA during genetic recombination and DNA repair. Endonuclease that resolves HJ intermediates. Cleaves cruciform DNA by making single-stranded nicks across the HJ at symmetrical positions within the homologous arms, yielding a 5'-phosphate and a 3'-hydroxyl group; requires a central core of homology in the junction. The consensus cleavage sequence is 5'-(A/T)TT(C/G)-3'. Cleavage occurs on the 3'-side of the TT dinucleotide at the point of strand exchange. HJ branch migration catalyzed by RuvA-RuvB allows RuvC to scan DNA until it finds its consensus sequence, where it cleaves and resolves the cruciform DNA. This Legionella pneumophila (strain Lens) protein is Crossover junction endodeoxyribonuclease RuvC.